Consider the following 398-residue polypeptide: MSEDDPRPLHIRRQGLDPADELLAAGALTRVTIGSGADAETHWMATAHAVVRQVMGDHQQFSTRRRWDPRDEIGGKGIFRPRELVGNLMDYDPPEHTRLRRKLTPGFTLRKMQRMAPYIEQIVNDRLDEMERAGSPADLIAFVADKVPGAVLCELVGVPRDDRDMFMKLCHGHLDASLSQKRRAALGDKFSRYLLAMIARERKEPGEGMIGAVVAEYGDDATDEELRGFCVQVMLAGDDNISGMIGLGVLAMLRHPEQIDAFRGDEQSAQRAVDELIRYLTVPYSPTPRIAREDLTLAGQEIKKGDSVICSLPAANRDPALAPDVDRLDVTREPIPHVAFGHGVHHCLGAALARLELRTVFTELWRRFPALRLADPAQDTEFRLTTPAYGLTELMVAW.

Residue Cys347 coordinates heme.

The protein belongs to the cytochrome P450 family. Heme is required as a cofactor.

It functions in the pathway antibiotic biosynthesis; vancomycin biosynthesis. Its function is as follows. Involved in the coupling of aromatic side chains of the heptapeptide of vancomycin. The polypeptide is Cytochrome P450 165B3 (cyp165B3) (Amycolatopsis orientalis (Nocardia orientalis)).